The following is a 141-amino-acid chain: Hemoglobin subunit alpha-3 (141 aa).

At S1 the chain carries N-acetylserine. The Globin domain maps to 1–141 (SLSASEKAAV…VSAVLTSKYR (141 aa)). An O2-binding site is contributed by H58. Residue H87 coordinates heme b.

Belongs to the globin family. Heterotetramer of two alpha chains and two beta chains. In terms of tissue distribution, red blood cells.

In terms of biological role, this is a tadpole (larval) alpha chain. The chain is Hemoglobin subunit alpha-3 from Aquarana catesbeiana (American bullfrog).